Here is a 275-residue protein sequence, read N- to C-terminus: Polyamine aminopropyltransferase (275 aa).

A PABS domain is found at 2 to 235 (HLWFTEKQND…AMWSFTIGSK (234 aa)). Position 31 (Q31) interacts with S-methyl-5'-thioadenosine. Spermidine contacts are provided by H62 and D86. S-methyl-5'-thioadenosine is bound by residues E106 and 137-138 (DG). The Proton acceptor role is filled by D155. Spermidine is bound at residue 155-158 (DSTD). P162 lines the S-methyl-5'-thioadenosine pocket.

This sequence belongs to the spermidine/spermine synthase family. Homodimer or homotetramer.

The protein localises to the cytoplasm. The catalysed reaction is S-adenosyl 3-(methylsulfanyl)propylamine + putrescine = S-methyl-5'-thioadenosine + spermidine + H(+). The protein operates within amine and polyamine biosynthesis; spermidine biosynthesis; spermidine from putrescine: step 1/1. In terms of biological role, catalyzes the irreversible transfer of a propylamine group from the amino donor S-adenosylmethioninamine (decarboxy-AdoMet) to putrescine (1,4-diaminobutane) to yield spermidine. This is Polyamine aminopropyltransferase from Desulforudis audaxviator (strain MP104C).